We begin with the raw amino-acid sequence, 150 residues long: Lipoprotein signal peptidase (150 aa).

Helical transmembrane passes span 5 to 25 (LSLVIIVVGIIADQVFKNWVV), 59 to 79 (QQWFFLVLTPIVLIVALWFLW), and 83 to 103 (GQNWYFAGLTLIIAGALGNFI). Residues aspartate 113 and aspartate 129 contribute to the active site. A helical membrane pass occupies residues 124-144 (IFNIADILLSVGFVVLFIAIL).

Belongs to the peptidase A8 family.

The protein resides in the cell membrane. It carries out the reaction Release of signal peptides from bacterial membrane prolipoproteins. Hydrolyzes -Xaa-Yaa-Zaa-|-(S,diacylglyceryl)Cys-, in which Xaa is hydrophobic (preferably Leu), and Yaa (Ala or Ser) and Zaa (Gly or Ala) have small, neutral side chains.. Its pathway is protein modification; lipoprotein biosynthesis (signal peptide cleavage). Its function is as follows. This protein specifically catalyzes the removal of signal peptides from prolipoproteins. This is Lipoprotein signal peptidase from Lactococcus lactis subsp. cremoris (strain MG1363).